We begin with the raw amino-acid sequence, 350 residues long: Biotin synthase (350 aa).

The Radical SAM core domain occupies 54-278 (REIQLSTLLS…TMPQSYVRLS (225 aa)). 3 residues coordinate [4Fe-4S] cluster: Cys69, Cys73, and Cys76. Residues Cys113, Cys144, Cys204, and Arg276 each coordinate [2Fe-2S] cluster.

The protein belongs to the radical SAM superfamily. Biotin synthase family. As to quaternary structure, homodimer. [4Fe-4S] cluster is required as a cofactor. [2Fe-2S] cluster serves as cofactor.

The catalysed reaction is (4R,5S)-dethiobiotin + (sulfur carrier)-SH + 2 reduced [2Fe-2S]-[ferredoxin] + 2 S-adenosyl-L-methionine = (sulfur carrier)-H + biotin + 2 5'-deoxyadenosine + 2 L-methionine + 2 oxidized [2Fe-2S]-[ferredoxin]. It participates in cofactor biosynthesis; biotin biosynthesis; biotin from 7,8-diaminononanoate: step 2/2. In terms of biological role, catalyzes the conversion of dethiobiotin (DTB) to biotin by the insertion of a sulfur atom into dethiobiotin via a radical-based mechanism. In Neisseria gonorrhoeae (strain ATCC 700825 / FA 1090), this protein is Biotin synthase.